We begin with the raw amino-acid sequence, 118 residues long: Small ribosomal subunit protein uS13 (118 aa).

The segment at 94–118 (SLPVRGQRTKTNARTRKGPRKAIKK) is disordered.

It belongs to the universal ribosomal protein uS13 family. Part of the 30S ribosomal subunit. Forms a loose heterodimer with protein S19. Forms two bridges to the 50S subunit in the 70S ribosome.

Its function is as follows. Located at the top of the head of the 30S subunit, it contacts several helices of the 16S rRNA. In the 70S ribosome it contacts the 23S rRNA (bridge B1a) and protein L5 of the 50S subunit (bridge B1b), connecting the 2 subunits; these bridges are implicated in subunit movement. Contacts the tRNAs in the A and P-sites. This chain is Small ribosomal subunit protein uS13, found in Aeromonas hydrophila subsp. hydrophila (strain ATCC 7966 / DSM 30187 / BCRC 13018 / CCUG 14551 / JCM 1027 / KCTC 2358 / NCIMB 9240 / NCTC 8049).